The sequence spans 302 residues: uncharacterized protein (302 aa).

The N-terminal stretch at 1-28 (MNKLTAQNLLKKSRFLKYSLLTSISVGA) is a signal peptide.

This is an uncharacterized protein from Rickettsia prowazekii (strain Madrid E).